Here is a 219-residue protein sequence, read N- to C-terminus: Large ribosomal subunit protein bL25 (219 aa).

The interval 176 to 219 (VTVVPPTDEPSEEEVEAMEGESATEEPEVVDEDKEDDEEENKED) is disordered. A compositionally biased stretch (acidic residues) spans 184 to 219 (EPSEEEVEAMEGESATEEPEVVDEDKEDDEEENKED).

The protein belongs to the bacterial ribosomal protein bL25 family. CTC subfamily. As to quaternary structure, part of the 50S ribosomal subunit; part of the 5S rRNA/L5/L18/L25 subcomplex. Contacts the 5S rRNA. Binds to the 5S rRNA independently of L5 and L18.

Its function is as follows. This is one of the proteins that binds to the 5S RNA in the ribosome where it forms part of the central protuberance. This is Large ribosomal subunit protein bL25 from Staphylococcus epidermidis (strain ATCC 12228 / FDA PCI 1200).